Reading from the N-terminus, the 160-residue chain is Phosphopantetheine adenylyltransferase (160 aa).

A substrate-binding site is contributed by S9. Residues 9-10 and H17 contribute to the ATP site; that span reads SF. Positions 41, 73, and 87 each coordinate substrate. ATP-binding positions include 88–90, E98, and 122–128; these read GLR and YSFVSSS.

Belongs to the bacterial CoaD family. In terms of assembly, homohexamer. Requires Mg(2+) as cofactor.

It localises to the cytoplasm. It carries out the reaction (R)-4'-phosphopantetheine + ATP + H(+) = 3'-dephospho-CoA + diphosphate. It participates in cofactor biosynthesis; coenzyme A biosynthesis; CoA from (R)-pantothenate: step 4/5. Its function is as follows. Reversibly transfers an adenylyl group from ATP to 4'-phosphopantetheine, yielding dephospho-CoA (dPCoA) and pyrophosphate. The protein is Phosphopantetheine adenylyltransferase of Mycobacterium leprae (strain TN).